The sequence spans 300 residues: Inosose dehydratase (300 aa).

Belongs to the IolE/MocC family. Glutathione is required as a cofactor. The cofactor is Co(2+). Requires Mn(2+) as cofactor.

The catalysed reaction is scyllo-inosose = 3D-3,5/4-trihydroxycyclohexane-1,2-dione + H2O. Its pathway is polyol metabolism; myo-inositol degradation into acetyl-CoA; acetyl-CoA from myo-inositol: step 2/7. Catalyzes the dehydration of inosose (2-keto-myo-inositol, 2KMI or 2,4,6/3,5-pentahydroxycyclohexanone) to 3D-(3,5/4)-trihydroxycyclohexane-1,2-dione (D-2,3-diketo-4-deoxy-epi-inositol). This Bacillus licheniformis (strain ATCC 14580 / DSM 13 / JCM 2505 / CCUG 7422 / NBRC 12200 / NCIMB 9375 / NCTC 10341 / NRRL NRS-1264 / Gibson 46) protein is Inosose dehydratase.